Consider the following 187-residue polypeptide: Elongation factor P (187 aa).

The protein belongs to the elongation factor P family.

It is found in the cytoplasm. It functions in the pathway protein biosynthesis; polypeptide chain elongation. Involved in peptide bond synthesis. Stimulates efficient translation and peptide-bond synthesis on native or reconstituted 70S ribosomes in vitro. Probably functions indirectly by altering the affinity of the ribosome for aminoacyl-tRNA, thus increasing their reactivity as acceptors for peptidyl transferase. In Desulforapulum autotrophicum (strain ATCC 43914 / DSM 3382 / VKM B-1955 / HRM2) (Desulfobacterium autotrophicum), this protein is Elongation factor P.